The following is a 251-amino-acid chain: 3-deoxy-manno-octulosonate cytidylyltransferase (251 aa).

This sequence belongs to the KdsB family.

It is found in the cytoplasm. It carries out the reaction 3-deoxy-alpha-D-manno-oct-2-ulosonate + CTP = CMP-3-deoxy-beta-D-manno-octulosonate + diphosphate. The protein operates within nucleotide-sugar biosynthesis; CMP-3-deoxy-D-manno-octulosonate biosynthesis; CMP-3-deoxy-D-manno-octulosonate from 3-deoxy-D-manno-octulosonate and CTP: step 1/1. It participates in bacterial outer membrane biogenesis; lipopolysaccharide biosynthesis. In terms of biological role, activates KDO (a required 8-carbon sugar) for incorporation into bacterial lipopolysaccharide in Gram-negative bacteria. The protein is 3-deoxy-manno-octulosonate cytidylyltransferase of Vibrio parahaemolyticus serotype O3:K6 (strain RIMD 2210633).